The chain runs to 108 residues: Urease subunit gamma (108 aa).

The protein belongs to the urease gamma subunit family. As to quaternary structure, heterotrimer of UreA (gamma), UreB (beta) and UreC (alpha) subunits. Three heterotrimers associate to form the active enzyme.

It is found in the cytoplasm. It carries out the reaction urea + 2 H2O + H(+) = hydrogencarbonate + 2 NH4(+). It participates in nitrogen metabolism; urea degradation; CO(2) and NH(3) from urea (urease route): step 1/1. This Trichodesmium erythraeum (strain IMS101) protein is Urease subunit gamma.